We begin with the raw amino-acid sequence, 258 residues long: Hydroxyethylthiazole kinase (258 aa).

Substrate is bound at residue Met37. ATP-binding residues include Arg112 and Thr158. Ala185 contributes to the substrate binding site.

The protein belongs to the Thz kinase family. The cofactor is Mg(2+).

The enzyme catalyses 5-(2-hydroxyethyl)-4-methylthiazole + ATP = 4-methyl-5-(2-phosphooxyethyl)-thiazole + ADP + H(+). The protein operates within cofactor biosynthesis; thiamine diphosphate biosynthesis; 4-methyl-5-(2-phosphoethyl)-thiazole from 5-(2-hydroxyethyl)-4-methylthiazole: step 1/1. Catalyzes the phosphorylation of the hydroxyl group of 4-methyl-5-beta-hydroxyethylthiazole (THZ). This Rhizobium etli (strain ATCC 51251 / DSM 11541 / JCM 21823 / NBRC 15573 / CFN 42) protein is Hydroxyethylthiazole kinase.